A 396-amino-acid polypeptide reads, in one-letter code: Phosphoglycerate kinase (396 aa).

Residues 24 to 26 (DFN), Arg-39, 62 to 65 (HLGR), Arg-120, and Arg-153 each bind substrate. ATP contacts are provided by residues Lys-203, Gly-294, Glu-325, and 352-355 (GGDS).

This sequence belongs to the phosphoglycerate kinase family. In terms of assembly, monomer.

The protein localises to the cytoplasm. The catalysed reaction is (2R)-3-phosphoglycerate + ATP = (2R)-3-phospho-glyceroyl phosphate + ADP. Its pathway is carbohydrate degradation; glycolysis; pyruvate from D-glyceraldehyde 3-phosphate: step 2/5. The sequence is that of Phosphoglycerate kinase from Dictyoglomus turgidum (strain DSM 6724 / Z-1310).